A 281-amino-acid polypeptide reads, in one-letter code: sn-glycerol-3-phosphate transport system permease protein UgpE (281 aa).

6 consecutive transmembrane segments (helical) span residues 16 to 36 (LILG…AATL), 85 to 105 (FSIT…IVWF), 113 to 133 (FFWM…FPTV), 142 to 162 (LDSY…TFLF), 202 to 222 (ALFV…LLII), and 247 to 267 (WNSV…IVLV). One can recognise an ABC transmembrane type-1 domain in the interval 77 to 268 (LLNSFVMAFS…IPPVVIVLVM (192 aa)).

Belongs to the binding-protein-dependent transport system permease family. UgpAE subfamily. As to quaternary structure, the complex is composed of two ATP-binding proteins (UgpC), two transmembrane proteins (UgpA and UgpE) and a solute-binding protein (UgpB).

The protein localises to the cell inner membrane. Its function is as follows. Part of the ABC transporter complex UgpBAEC involved in sn-glycerol-3-phosphate (G3P) import. Probably responsible for the translocation of the substrate across the membrane. This Escherichia coli O157:H7 protein is sn-glycerol-3-phosphate transport system permease protein UgpE (ugpE).